A 468-amino-acid polypeptide reads, in one-letter code: 6-phospho-beta-galactosidase (468 aa).

D-galactose 6-phosphate-binding residues include Gln-19, His-116, Asn-159, Glu-160, and Asn-297. Glu-160 acts as the Proton donor in catalysis. The Nucleophile role is filled by Glu-375. Positions 428, 429, 435, and 437 each coordinate D-galactose 6-phosphate.

This sequence belongs to the glycosyl hydrolase 1 family.

It catalyses the reaction a 6-phospho-beta-D-galactoside + H2O = D-galactose 6-phosphate + an alcohol. It functions in the pathway carbohydrate metabolism; lactose degradation; D-galactose 6-phosphate and beta-D-glucose from lactose 6-phosphate: step 1/1. The protein is 6-phospho-beta-galactosidase of Streptococcus pyogenes serotype M2 (strain MGAS10270).